Reading from the N-terminus, the 250-residue chain is 26 kDa periplasmic immunogenic protein (250 aa).

The N-terminal stretch at 1-28 (MNTRASNFLAASFSTIMLVGAFSLPAFA) is a signal peptide.

It is found in the periplasm. The polypeptide is 26 kDa periplasmic immunogenic protein (bp26) (Brucella melitensis biotype 1 (strain ATCC 23456 / CCUG 17765 / NCTC 10094 / 16M)).